The sequence spans 338 residues: MANRANRHAARTEDSDNTINYVQCDGLAVMKMVKHCHEESSNMDLAQGALLGLVVDKCLEITNCFPFPKSGDETMDEEMYQLTVMRRLRRVNVDHLHVGWYQSSDVGNSLSMALLESQYHYQTSIEESVVVVYDTQKSSRGFLCLKAYRLTPQAIQMYKDGDFTPEAFRTLKVGYENLFAEIPIVIKNSPLTNIMMSELNELLPEDKGHNFLDLGTATVLENQMRSLIERVDELYQEAVRYNKYQQVVFKQDTEKHRALAKLAAENAVRTSKGEPTVPEEEVIKQFRPMTAPNRLTATITSGQINTHAQHIAQFCSQSLAKLFITESLQIAKEAKETK.

An MPN domain is found at 22-154 (VQCDGLAVMK…LKAYRLTPQA (133 aa)).

The protein belongs to the eIF-3 subunit H family. Component of the eukaryotic translation initiation factor 3 (eIF-3) complex. The eIF-3 complex interacts with pix. Interacts with mxt.

It localises to the cytoplasm. Component of the eukaryotic translation initiation factor 3 (eIF-3) complex, which is involved in protein synthesis of a specialized repertoire of mRNAs and, together with other initiation factors, stimulates binding of mRNA and methionyl-tRNAi to the 40S ribosome. The eIF-3 complex specifically targets and initiates translation of a subset of mRNAs involved in cell proliferation. The sequence is that of Eukaryotic translation initiation factor 3 subunit H from Drosophila melanogaster (Fruit fly).